We begin with the raw amino-acid sequence, 152 residues long: TOMM20-like protein 1 (152 aa).

At 1 to 9 (MPSVRSLLR) the chain is on the mitochondrial intermembrane side. A helical membrane pass occupies residues 10-29 (LLAAAAACGAFAFLGYCIYL). The Cytoplasmic portion of the chain corresponds to 30–152 (NRKRRGDPAF…EQDCLEDDPD (123 aa)). Residues 43 to 62 (LRDKRRAEPQKAEEQGTQLW) are disordered. Positions 47–56 (RRAEPQKAEE) are enriched in basic and acidic residues.

This sequence belongs to the Tom20 family.

It localises to the mitochondrion outer membrane. In Homo sapiens (Human), this protein is TOMM20-like protein 1 (TOMM20L).